The primary structure comprises 541 residues: MVINLCLPQFRPRIHCNKISADGYEVENLISEDLTKRSHGFRTEYFIKPPVYVTVSFPFNVEICRINIDLTAGGGQNVTGLEMYTSASSSRVSWNTPQCRTLGPAEPSVPDKEAFTLVGKVLLKNQSQVVFSHRGFKARPPFGAMEATLPSPAVVAQELWNKGALSLSHVAHLRICITHVTGGGIPCIKRLEVWGQPAKTCSQEVIDSILLVTSENLPQDVALQAPALPMESDCDPGDQPESQQAPSSLQKLAEIIQDVPEEFLDPITLEIMPCPMLLPSGKVIDQSTLEKCNRSEATWGRVPSDPFTGVAFTPHSQPLPHPSLKARIDHFLLQHSIPGCHLLGRAQTALAVIPSSIVLPSQKRKIEQAEHVPDSNFGVNASCFSATSPLVLPTTSEHTAKKMKATNEPSLTHMDCSTGPLSHEQKLSQSLEIALASTLGSMPSFTARLTRGQLQHLGTRGSNTSWRPGTGSEQPGSILGPECASCKRVFSPYFKKEPVYQLPCGHLLCRPCLGEKQRSLPMTCTACQRPVASQDVLRVHF.

The 81-residue stretch at 258–338 folds into the U-box domain; the sequence is DVPEEFLDPI…DHFLLQHSIP (81 aa). Residue R451 is modified to Asymmetric dimethylarginine. Residues 483 to 528 form an RING-type zinc finger; that stretch reads CASCKRVFSPYFKKEPVYQLPCGHLLCRPCLGEKQRSLPMTCTACQ.

As to quaternary structure, interacts with UBE2L3. Interacts with VCP. In terms of tissue distribution, expressed in liver, heart, brain, kidney and testis.

The protein resides in the nucleus. The catalysed reaction is S-ubiquitinyl-[E2 ubiquitin-conjugating enzyme]-L-cysteine + [acceptor protein]-L-lysine = [E2 ubiquitin-conjugating enzyme]-L-cysteine + N(6)-ubiquitinyl-[acceptor protein]-L-lysine.. It participates in protein modification; protein ubiquitination. Functionally, may have a ubiquitin-protein ligase activity acting as an E3 ubiquitin-protein ligase or as a ubiquitin-ubiquitin ligase promoting elongation of ubiquitin chains on substrates. The chain is RING finger protein 37 from Homo sapiens (Human).